The chain runs to 132 residues: Myelin P2 protein (132 aa).

An N-acetylserine modification is found at Ser-2. A (9Z)-octadecenoate-binding site is contributed by Arg-107. Arg-107 provides a ligand contact to hexadecanoate. The cysteines at positions 118 and 125 are disulfide-linked. Residue 127–129 (RIY) participates in (9Z)-octadecenoate binding. 127–129 (RIY) contacts hexadecanoate.

The protein belongs to the calycin superfamily. Fatty-acid binding protein (FABP) family. In terms of assembly, monomer. Detected in spinal cord (at protein level).

The protein resides in the cytoplasm. Functionally, may play a role in lipid transport protein in Schwann cells. May bind cholesterol. The polypeptide is Myelin P2 protein (PMP2) (Equus caballus (Horse)).